We begin with the raw amino-acid sequence, 104 residues long: Large ribosomal subunit protein eL36 (104 aa).

Belongs to the eukaryotic ribosomal protein eL36 family.

The protein is Large ribosomal subunit protein eL36 (RPL36) of Tetrahymena thermophila (strain SB210).